The following is a 482-amino-acid chain: MPTVSVKWQKKVLDGIEIDVSLPPYVFKAQLYDLTGVPPERQKIMVKGGLLKDDGDWAAIGVKDGQKLMMMGTADEIVKAPEKAIVFAEDLPEEALATNLGYSAGLVNLGNTCYMNSTVQCLKSVPELKSALSNYSLAARSNDVDQTSHMLTVATRELFGELDRSVNAVSPSQFWMVLRKKYPQFSQLQNGMHMQQDAEECWTQLLYTLSQSLKAPTSSEGADAVKALFGVNLQSRLHCQESGEESSETESVYSLKCHISHEVNHLHEGLKHGLKGELEKTSPALGRTALYVKESLIDSLPRYLTVQFVRFFWKRESNQKAKILRKVDYPLVLDIFDLCSEDLRKKLEAPRQKLREEEGKKLGLQTSAKSGSKDSDVKMTDAEASANGSGESSTVNPQEGTSSEKETHMTGIYDLVAVLTHKGRSADSGHYVAWVKQESGKWIQYDDDNPSMQREEDITKLSGGGDWHMAYITMYKARFVSM.

Residues 2-77 (PTVSVKWQKK…LMMMGTADEI (76 aa)) enclose the Ubiquitin-like domain. A USP domain is found at 104–478 (AGLVNLGNTC…MAYITMYKAR (375 aa)). Cys113 (nucleophile) is an active-site residue. Residues 172–191 (SQFWMVLRKKYPQFSQLQNG) are calmodulin-binding. 2 stretches are compositionally biased toward basic and acidic residues: residues 350 to 361 (PRQKLREEEGKK) and 371 to 381 (GSKDSDVKMTD). The segment at 350–407 (PRQKLREEEGKKLGLQTSAKSGSKDSDVKMTDAEASANGSGESSTVNPQEGTSSEKET) is disordered. Over residues 382–393 (AEASANGSGESS) the composition is skewed to low complexity. Catalysis depends on His430, which acts as the Proton acceptor.

It belongs to the peptidase C19 family. As to quaternary structure, interacts with calmodulin (CaM).

It catalyses the reaction Thiol-dependent hydrolysis of ester, thioester, amide, peptide and isopeptide bonds formed by the C-terminal Gly of ubiquitin (a 76-residue protein attached to proteins as an intracellular targeting signal).. In terms of biological role, recognizes and hydrolyzes the peptide bond at the C-terminal Gly of ubiquitin. Involved in the processing of poly-ubiquitin precursors as well as that of ubiquitinated proteins. This chain is Ubiquitin carboxyl-terminal hydrolase 6 (UBP6), found in Arabidopsis thaliana (Mouse-ear cress).